The primary structure comprises 1490 residues: ABC transporter CDR4 (1490 aa).

Polar residues predominate over residues 1 to 12; sequence MADADTSSNSSK. 2 disordered regions span residues 1-26 and 53-75; these read MADADTSSNSSKTNEDRSQEGFGTYQ and LKRQHSRQESQKSNEQESELSGK. Topologically, residues 1-516 are cytoplasmic; the sequence is MADADTSSNS…NILRIKGNPS (516 aa). A compositionally biased stretch (basic and acidic residues) spans 58–67; that stretch reads SRQESQKSNE. In terms of domain architecture, ABC transporter 1 spans 151–407; it reads PKYLSLFFRE…FIDMGYECPQ (257 aa). A run of 6 helical transmembrane segments spans residues 517 to 537, 551 to 571, 601 to 621, 626 to 646, 659 to 679, and 767 to 787; these read IHLFQIFGNIGMSFILSSIFY, AALFFAVLFNAFSCLLEIFSL, LPTKFIIAIGFNLVYYFMVNF, GNFFFYLLINFSATLAMSHIF, AMTPAAILLLALTIFTGFVIP, and FGIVIGFIVFFFCTYILLCEI. Residues 788 to 1182 lie on the Cytoplasmic side of the membrane; the sequence is NKGAMQKGEI…VFEQNWRTPS (395 aa). In terms of domain architecture, ABC transporter 2 spans 846-1090; that stretch reads FFWRDLTYQV…LINYFEKYGA (245 aa). 882-889 contributes to the ATP binding site; it reads GASGAGKT. The next 3 helical transmembrane spans lie at 1183 to 1203, 1217 to 1237, and 1268 to 1288; these read YLYSKFLLVVTSSLFNGFSFY, FSVFMFLVILHTLIQQYLPTF, and IPWNIICGTLGYFCWYYPVGL. Asparagine 1291 carries N-linked (GlcNAc...) asparagine glycosylation. 3 consecutive transmembrane segments (helical) span residues 1304–1324, 1333–1353, and 1370–1390; these read FMWFAIVLFFIYTSTLAQLCI, AANLSVLLFTMCLAFCGVLVT, and FTYLVSVMLSVGLVDAPVTCA. N-linked (GlcNAc...) asparagine glycosylation is present at asparagine 1424. A helical transmembrane segment spans residues 1455-1475; it reads IGIYIAFIGINIIGTFILYWF.

It belongs to the ABC transporter superfamily. ABCG family. PDR (TC 3.A.1.205) subfamily.

It localises to the membrane. The sequence is that of ABC transporter CDR4 (CDR4) from Candida albicans (Yeast).